Consider the following 256-residue polypeptide: Imidazole glycerol phosphate synthase subunit HisF (256 aa).

Active-site residues include aspartate 11 and aspartate 130.

Belongs to the HisA/HisF family. In terms of assembly, heterodimer of HisH and HisF.

The protein localises to the cytoplasm. The enzyme catalyses 5-[(5-phospho-1-deoxy-D-ribulos-1-ylimino)methylamino]-1-(5-phospho-beta-D-ribosyl)imidazole-4-carboxamide + L-glutamine = D-erythro-1-(imidazol-4-yl)glycerol 3-phosphate + 5-amino-1-(5-phospho-beta-D-ribosyl)imidazole-4-carboxamide + L-glutamate + H(+). It functions in the pathway amino-acid biosynthesis; L-histidine biosynthesis; L-histidine from 5-phospho-alpha-D-ribose 1-diphosphate: step 5/9. Its function is as follows. IGPS catalyzes the conversion of PRFAR and glutamine to IGP, AICAR and glutamate. The HisF subunit catalyzes the cyclization activity that produces IGP and AICAR from PRFAR using the ammonia provided by the HisH subunit. The chain is Imidazole glycerol phosphate synthase subunit HisF from Prochlorococcus marinus (strain MIT 9215).